Here is a 100-residue protein sequence, read N- to C-terminus: uncharacterized protein (100 aa).

3 consecutive transmembrane segments (helical) span residues 9-29 (VYTY…SWVV), 41-61 (PYLI…ITAP), and 72-92 (SIPF…FLGI).

The protein resides in the membrane. This is an uncharacterized protein from Saccharomyces cerevisiae (strain ATCC 204508 / S288c) (Baker's yeast).